Consider the following 172-residue polypeptide: Cell division protein SepF (172 aa).

Positions 18-73 are disordered; it reads RRYDEEDLPDEELTTEVYSDDGYEPSSEVTQLHHHDSNEQHARGHKAVQHRRRSEL. Residues 22 to 40 are compositionally biased toward acidic residues; the sequence is EEDLPDEELTTEVYSDDGY. The span at 48–59 shows a compositional bias: basic and acidic residues; that stretch reads QLHHHDSNEQHA. The segment covering 60–70 has biased composition (basic residues); sequence RGHKAVQHRRR.

The protein belongs to the SepF family. As to quaternary structure, homodimer. Interacts with FtsZ.

The protein localises to the cytoplasm. Its function is as follows. Cell division protein that is part of the divisome complex and is recruited early to the Z-ring. Probably stimulates Z-ring formation, perhaps through the cross-linking of FtsZ protofilaments. Its function overlaps with FtsA. This is Cell division protein SepF from Cutibacterium acnes (strain DSM 16379 / KPA171202) (Propionibacterium acnes).